The following is a 261-amino-acid chain: tRNA pseudouridine synthase A 2 (261 aa).

The active-site Nucleophile is D59. Y117 contacts substrate.

The protein belongs to the tRNA pseudouridine synthase TruA family. In terms of assembly, homodimer.

The catalysed reaction is uridine(38/39/40) in tRNA = pseudouridine(38/39/40) in tRNA. In terms of biological role, formation of pseudouridine at positions 38, 39 and 40 in the anticodon stem and loop of transfer RNAs. In Desulfotalea psychrophila (strain LSv54 / DSM 12343), this protein is tRNA pseudouridine synthase A 2.